A 688-amino-acid chain; its full sequence is Glycine--tRNA ligase beta subunit (688 aa).

This sequence belongs to the class-II aminoacyl-tRNA synthetase family. As to quaternary structure, tetramer of two alpha and two beta subunits.

Its subcellular location is the cytoplasm. It carries out the reaction tRNA(Gly) + glycine + ATP = glycyl-tRNA(Gly) + AMP + diphosphate. In Chromohalobacter salexigens (strain ATCC BAA-138 / DSM 3043 / CIP 106854 / NCIMB 13768 / 1H11), this protein is Glycine--tRNA ligase beta subunit.